A 217-amino-acid polypeptide reads, in one-letter code: MKFFLKESKVEKHGRQHLEKVMECYLKFEELMEAFYRGDCRLVSELTKEIAIKEHEADEIRRKMELEFYEGAFLPFDREDRIMLVESIDKVADVIESAAFTVSLGKVAFPAEFRDDFRAMMKVTGKTIRALHECVESLETDLGEAMRKVHEIERFEDEADIIERKIITGLYSAYRQDRIGVVKFLDMKEITRKVANISDRAEDASDRALIIIAKRRG.

This sequence belongs to the UPF0111 family.

The polypeptide is UPF0111 protein MTH_1689 (Methanothermobacter thermautotrophicus (strain ATCC 29096 / DSM 1053 / JCM 10044 / NBRC 100330 / Delta H) (Methanobacterium thermoautotrophicum)).